The primary structure comprises 508 residues: Photosystem II CP47 reaction center protein (508 aa).

A run of 6 helical transmembrane segments spans residues 21-36 (SVHIMHTALVAGWAGS), 101-115 (IVFSGLCFLAAIWHW), 140-156 (GIHLFLSGVACFGFGAF), 203-218 (IAAGTLGILAGLFHLS), 237-252 (VLSSSIAAVFFAAFVV), and 457-472 (SFALLFFFGHIWHGAR).

Belongs to the PsbB/PsbC family. PsbB subfamily. As to quaternary structure, PSII is composed of 1 copy each of membrane proteins PsbA, PsbB, PsbC, PsbD, PsbE, PsbF, PsbH, PsbI, PsbJ, PsbK, PsbL, PsbM, PsbT, PsbX, PsbY, PsbZ, Psb30/Ycf12, at least 3 peripheral proteins of the oxygen-evolving complex and a large number of cofactors. It forms dimeric complexes. Binds multiple chlorophylls. PSII binds additional chlorophylls, carotenoids and specific lipids. is required as a cofactor.

The protein localises to the plastid. The protein resides in the chloroplast thylakoid membrane. In terms of biological role, one of the components of the core complex of photosystem II (PSII). It binds chlorophyll and helps catalyze the primary light-induced photochemical processes of PSII. PSII is a light-driven water:plastoquinone oxidoreductase, using light energy to abstract electrons from H(2)O, generating O(2) and a proton gradient subsequently used for ATP formation. This chain is Photosystem II CP47 reaction center protein, found in Atropa belladonna (Belladonna).